The following is a 251-amino-acid chain: Adenosylcobinamide-GDP ribazoletransferase (251 aa).

6 helical membrane passes run 29–49 (FAGM…ILAV), 65–85 (SLLI…DGAM), 110–130 (AFGA…LCYL), 136–156 (LLIL…IVRY), 175–195 (AIDL…IARF), and 198–218 (LTVA…TGAW).

Belongs to the CobS family. It depends on Mg(2+) as a cofactor.

It localises to the cell inner membrane. The enzyme catalyses alpha-ribazole + adenosylcob(III)inamide-GDP = adenosylcob(III)alamin + GMP + H(+). It catalyses the reaction alpha-ribazole 5'-phosphate + adenosylcob(III)inamide-GDP = adenosylcob(III)alamin 5'-phosphate + GMP + H(+). It participates in cofactor biosynthesis; adenosylcobalamin biosynthesis; adenosylcobalamin from cob(II)yrinate a,c-diamide: step 7/7. Joins adenosylcobinamide-GDP and alpha-ribazole to generate adenosylcobalamin (Ado-cobalamin). Also synthesizes adenosylcobalamin 5'-phosphate from adenosylcobinamide-GDP and alpha-ribazole 5'-phosphate. The polypeptide is Adenosylcobinamide-GDP ribazoletransferase (Synechococcus elongatus (strain ATCC 33912 / PCC 7942 / FACHB-805) (Anacystis nidulans R2)).